A 167-amino-acid polypeptide reads, in one-letter code: Chorion class CB protein PC404 (167 aa).

The tract at residues 1–55 (IGREAIVGAGLQGPFGGPWPYDALSPFDMPYGPALPAMSCGAGSFGPSSGFAPAA) is left arm. A central domain region spans residues 56-126 (AYGGGLAVTS…GDGAVGIVAE (71 aa)). A right arm region spans residues 127–167 (TPFASTSVNPAYGYGGAIGGGVPYNSYGPIGYGGCGYNALY).

Belongs to the chorion protein family.

Functionally, this protein is one of many from the eggshell of the silk moth. The protein is Chorion class CB protein PC404 of Antheraea polyphemus (Polyphemus moth).